Here is a 309-residue protein sequence, read N- to C-terminus: 2-phospho-L-lactate transferase (309 aa).

7,8-didemethyl-8-hydroxy-5-deazariboflavin-binding residues include Asp-50 and Lys-89.

It belongs to the CofD family. In terms of assembly, homodimer. Mg(2+) is required as a cofactor.

The catalysed reaction is (2S)-lactyl-2-diphospho-5'-guanosine + 7,8-didemethyl-8-hydroxy-5-deazariboflavin = oxidized coenzyme F420-0 + GMP + H(+). Its pathway is cofactor biosynthesis; coenzyme F420 biosynthesis. Its function is as follows. Catalyzes the transfer of the 2-phospholactate moiety from (2S)-lactyl-2-diphospho-5'-guanosine to 7,8-didemethyl-8-hydroxy-5-deazariboflavin (FO) with the formation of oxidized coenzyme F420-0 and GMP. This chain is 2-phospho-L-lactate transferase, found in Methanococcus maripaludis (strain C5 / ATCC BAA-1333).